The following is a 256-amino-acid chain: Small ribosomal subunit protein uS2 (256 aa).

This sequence belongs to the universal ribosomal protein uS2 family.

The protein is Small ribosomal subunit protein uS2 of Ruegeria sp. (strain TM1040) (Silicibacter sp.).